Reading from the N-terminus, the 90-residue chain is Small ribosomal subunit protein bS20 (90 aa).

Residues 1-15 show a composition bias toward basic residues; sequence MANHKSAQKRIRQTK. Positions 1–22 are disordered; sequence MANHKSAQKRIRQTKTRTERNR.

This sequence belongs to the bacterial ribosomal protein bS20 family.

Its function is as follows. Binds directly to 16S ribosomal RNA. This is Small ribosomal subunit protein bS20 from Helicobacter hepaticus (strain ATCC 51449 / 3B1).